The chain runs to 338 residues: tRNA N6-adenosine threonylcarbamoyltransferase (338 aa).

Fe cation-binding residues include histidine 111 and histidine 115. Substrate is bound by residues 134–138 (LVSGG), aspartate 167, glycine 180, and asparagine 272. A Fe cation-binding site is contributed by aspartate 300.

It belongs to the KAE1 / TsaD family. Fe(2+) serves as cofactor.

It localises to the cytoplasm. It carries out the reaction L-threonylcarbamoyladenylate + adenosine(37) in tRNA = N(6)-L-threonylcarbamoyladenosine(37) in tRNA + AMP + H(+). Functionally, required for the formation of a threonylcarbamoyl group on adenosine at position 37 (t(6)A37) in tRNAs that read codons beginning with adenine. Is involved in the transfer of the threonylcarbamoyl moiety of threonylcarbamoyl-AMP (TC-AMP) to the N6 group of A37, together with TsaE and TsaB. TsaD likely plays a direct catalytic role in this reaction. This Shewanella pealeana (strain ATCC 700345 / ANG-SQ1) protein is tRNA N6-adenosine threonylcarbamoyltransferase.